The following is a 1343-amino-acid chain: MVYSYSEKKRIRKDFGKRPQVLDIPYLLSIQLDSFKKFTDQDPTGERGLEAAFRSVFPIKSFSGNSELQYVSYKLGEPVFDVKECQIRGVTYSAPLRVKLRMVLYDREAAPGTVKDIKEQEVYMGDIPLMTENGTFVINGTERVIVSQLHRSPGVFFDHDRGKTHSSGKVLYNARIIPYRGSWLDFEFDPKDALFVRIDRRRKLAASIILRALDYSTQDILDLFFERVQYKIKKDSLVMALVADRLRGETASYDIKDAEGNIIVEKGRRITARHIRQLEKTNTTELEVPVEYISGKIAAQDYIDPDTGEVLVSANAEISLEDLAKLSMAGIKDIDTLYVNELDHGAYISDTLRIDSTTNRLEALVEIYRMMRPGEPPTKDAAEALFQNLFFSEERYDLSKVGRMKFNRRLGIDDDEGTGILTKEDIVAVMQKIIEIRNGNDEVDDIDHLGNRRIRSVGEMAENQFRVGLVRVERAVRERLSLGDLNELMPQDLINAKPISAAVKEFFGSSQLSQFMDQNNPLSEVTHKRRISALGPGGLTRERAGFEVRDVHPTHYGRLCPIETPEGPNIGLINSLASFARTNSYGFLETPYRKVVDGVITDQVDYLSAIEEGRYVIAQANIEVDADGRMVEEQIACRHKGESTFMRAADVQYMDVSPQQIISVAASLIPFLEHDDANRALMGANMQRQAVPTLRADKPLVGTGIERTLAVDSGVVVAAKRGGYVDYVDASRIVVKVNEDELTPGEAGIDIYNLTKYTRSNQNTCINQRPCCSVGEPVVRGDVLADGPSTDLGDLALGQNMRIAFMPWNGYNFEDSILISERVAQEDRFTTIHIQELSCIARDTKLGSEEITADIPNVGESALSKLDESGIVYIGAEVKGGDILVGKVTPKGETQLTPEEKLLRAIFGEKASDVKDSSLRVPNSVKGTIIDVQVFTRDGVEKDKRAVEIEEMHIAQAKKDLTEEFKILEEGVFGRARNLLIGAGFAEAELDALPRPQLLVQTIEDETKQTELEQLAEQHEELKADFDKKFEIKRRKITQGDDLAPGVLKIVKVYLAVKRTIQPGDKMAGRHGNKGVISKINPIEDMPYDENGNPVDIVLNPLGVPSRMNIGQVLEVHLGAAAKGIGDRITAMLEEQRELAELRGYIKKVYELGEDVQQQVDIDSFTDEEVLRLAKNLKGGIPTATPAFDGAKEKEIKDMLELAGLPTSGQLKLFDGRTGNEFERPVTVGYMYMLKLNHLVDDKMHARSTGSYSLVTQQPLGGKAQFGGQRFGEMEVWALEAYGAAYTLQEMLTVKSDDVNGRTQMYKNIVDGNHQMQPGMPESFNVLLKEIRSLGINIELDQE.

This sequence belongs to the RNA polymerase beta chain family. In terms of assembly, the RNAP catalytic core consists of 2 alpha, 1 beta, 1 beta' and 1 omega subunit. When a sigma factor is associated with the core the holoenzyme is formed, which can initiate transcription.

The catalysed reaction is RNA(n) + a ribonucleoside 5'-triphosphate = RNA(n+1) + diphosphate. Functionally, DNA-dependent RNA polymerase catalyzes the transcription of DNA into RNA using the four ribonucleoside triphosphates as substrates. In Shewanella loihica (strain ATCC BAA-1088 / PV-4), this protein is DNA-directed RNA polymerase subunit beta.